The chain runs to 237 residues: Exosome complex component Rrp4 (237 aa).

One can recognise an S1 motif domain in the interval 72–144 (GHIVVGKVVD…LSKDPVLTIK (73 aa)). In terms of domain architecture, KH spans 152–211 (PRGTLVEIPPQKVPRVIGRRGSMVSMIEDLLGVKLIVGQNGRIVVVGDDPQRVEIAVLAV).

This sequence belongs to the RRP4 family. In terms of assembly, component of the archaeal exosome complex. Forms a trimer of Rrp4 and/or Csl4 subunits. The trimer associates with a hexameric ring-like arrangement composed of 3 Rrp41-Rrp42 heterodimers.

It localises to the cytoplasm. Functionally, non-catalytic component of the exosome, which is a complex involved in RNA degradation. Increases the RNA binding and the efficiency of RNA degradation. Confers strong poly(A) specificity to the exosome. The chain is Exosome complex component Rrp4 from Thermofilum pendens (strain DSM 2475 / Hrk 5).